Consider the following 250-residue polypeptide: Isoprenyl transferase (250 aa).

Residue D27 is part of the active site. Residue D27 coordinates Mg(2+). Substrate contacts are provided by residues 28 to 31 (GNRR), W32, H48, and 76 to 78 (STE). Catalysis depends on N79, which acts as the Proton acceptor. Substrate contacts are provided by residues F80, R82, R199, and 205–207 (RVS). E218 is a binding site for Mg(2+).

The protein belongs to the UPP synthase family. In terms of assembly, homodimer. Mg(2+) is required as a cofactor.

Its function is as follows. Catalyzes the condensation of isopentenyl diphosphate (IPP) with allylic pyrophosphates generating different type of terpenoids. The chain is Isoprenyl transferase from Chlamydia pneumoniae (Chlamydophila pneumoniae).